The sequence spans 139 residues: Small ribosomal subunit protein bS6 (139 aa).

The interval 119–139 (LKGASKVETPTGPESTDIQEK) is disordered. The span at 130-139 (GPESTDIQEK) shows a compositional bias: polar residues.

It belongs to the bacterial ribosomal protein bS6 family.

Functionally, binds together with bS18 to 16S ribosomal RNA. This is Small ribosomal subunit protein bS6 from Borreliella burgdorferi (strain ZS7) (Borrelia burgdorferi).